Here is a 255-residue protein sequence, read N- to C-terminus: D-aminoacyl-tRNA deacylase (255 aa).

This sequence belongs to the DtdA deacylase family. Monomer. Zn(2+) is required as a cofactor.

The catalysed reaction is a D-aminoacyl-tRNA + H2O = a tRNA + a D-alpha-amino acid + H(+). The enzyme catalyses glycyl-tRNA(Ala) + H2O = tRNA(Ala) + glycine + H(+). Its function is as follows. D-aminoacyl-tRNA deacylase with broad substrate specificity. By recycling D-aminoacyl-tRNA to D-amino acids and free tRNA molecules, this enzyme counteracts the toxicity associated with the formation of D-aminoacyl-tRNA entities in vivo. The sequence is that of D-aminoacyl-tRNA deacylase from Picrophilus torridus (strain ATCC 700027 / DSM 9790 / JCM 10055 / NBRC 100828 / KAW 2/3).